The following is a 166-amino-acid chain: Phospholipase A2 inhibitor CgMIP-II (166 aa).

Residues 1–19 (MRLILLSGLLLLGTFLANG) form the signal peptide. Residues 46–161 (LRYALMTVHN…CDDNLLVVCE (116 aa)) form the C-type lectin domain. 2 disulfide bridges follow: cysteine 83–cysteine 160 and cysteine 138–cysteine 152. N-linked (GlcNAc...) asparagine glycosylation occurs at asparagine 122.

The protein belongs to the alpha-type phospholipase A2 inhibitor family. As to quaternary structure, homomer composed of 20-25-kDa subunits that form oligomers of 180 kDa. In terms of processing, N-glycosylated. The glycosidic chain may contain superficial sialic acid residues. In terms of tissue distribution, expressed by the liver.

It localises to the secreted. In terms of biological role, selectively inhibits the toxic properties of myotoxin-II from the same venom (AC P81165). Does not inhibit PLA2, anti-coagulant and lethal activities of the basic myotoxin I from the same venom (AC P0DQP6), nor the different crotoxin forms (heterodimer or subunit B alone). Does not block the enzymatic activity of crude acidic PLA2 fractions from the same venom. The sequence is that of Phospholipase A2 inhibitor CgMIP-II from Cerrophidion godmani (Porthidium godmani).